Consider the following 59-residue polypeptide: MAFDKKLLDIVACPVCKGKLEYDKVAQQLICKADKLAYPITDGIPVLLENRALPLTESV.

The protein belongs to the UPF0434 family.

The polypeptide is UPF0434 protein SO_2800 (Shewanella oneidensis (strain ATCC 700550 / JCM 31522 / CIP 106686 / LMG 19005 / NCIMB 14063 / MR-1)).